The sequence spans 307 residues: Serine/threonine-protein phosphatase PP2A-5 catalytic subunit (307 aa).

The Mn(2+) site is built by Asp-55, His-57, Asp-83, and Asn-115. His-116 serves as the catalytic Proton donor. 2 residues coordinate Mn(2+): His-165 and His-239. Leu-307 is subject to Leucine methyl ester.

This sequence belongs to the PPP phosphatase family. PP-2A subfamily. In terms of assembly, PP2A consists of a common heterodimeric core enzyme, composed of a 36 kDa catalytic subunit (subunit C) and a 65 kDa constant regulatory subunit (subunit A), that associates with a variety of regulatory subunits such as subunits B (the R2/B/PR55/B55, R3/B''/PR72/PR130/PR59 and R5/B'/B56 families). Also interacts with CHIP and TAF12B. Interacts with B'THETA. Interacts with CLC-A, CLC-B, CLC-C and CLC-G. It depends on Mn(2+) as a cofactor. In terms of processing, reversibly methyl esterified on Leu-307 by leucine carboxyl methyltransferase 1 (LCMT1) and pectin methylesterase 1 (PME1). Carboxyl methylation influences the affinity of the catalytic subunit for the different regulatory subunits, thereby modulating the PP2A holoenzyme's substrate specificity, enzyme activity and cellular localization. Phosphorylation of either threonine (by autophosphorylation-activated protein kinase) or tyrosine results in inactivation of the phosphatase. Auto-dephosphorylation has been suggested as a mechanism for reactivation. Post-translationally, ubiquitinated. CHIP-mediated ubiquitination enhances phosphatase activity after an abiotic stress such as low temperature or darkness.

It localises to the cytoplasm. It is found in the cytosol. Its subcellular location is the peroxisome. The enzyme catalyses O-phospho-L-seryl-[protein] + H2O = L-seryl-[protein] + phosphate. It catalyses the reaction O-phospho-L-threonyl-[protein] + H2O = L-threonyl-[protein] + phosphate. In terms of biological role, associates with the serine/threonine-protein phosphatase PP2A regulatory subunits A and B' to positively regulates beta-oxidation of fatty acids and protoauxins in peroxisomes by dephosphorylating peroxisomal beta-oxidation-related proteins. Involved in the positive regulation of salt stress responses. May function by increasing chloride channel activities on vacuolar membranes. The protein is Serine/threonine-protein phosphatase PP2A-5 catalytic subunit of Arabidopsis thaliana (Mouse-ear cress).